A 627-amino-acid chain; its full sequence is UvrABC system protein C (627 aa).

In terms of domain architecture, GIY-YIG spans 26–105 (PSPGVYQFRN…IKELKPRYNV (80 aa)). The UVR domain occupies 219-254 (STMIRSLTSAMQLFARELKFERAAEIKMQLESLKRY).

This sequence belongs to the UvrC family. In terms of assembly, interacts with UvrB in an incision complex.

The protein resides in the cytoplasm. In terms of biological role, the UvrABC repair system catalyzes the recognition and processing of DNA lesions. UvrC both incises the 5' and 3' sides of the lesion. The N-terminal half is responsible for the 3' incision and the C-terminal half is responsible for the 5' incision. This Pelodictyon phaeoclathratiforme (strain DSM 5477 / BU-1) protein is UvrABC system protein C.